The following is a 549-amino-acid chain: MKNINPTQTAAWQALQKHFDEMKDVTIADLFAKDGDRFSKFSVTFDDQMLVDYSKNRITEETLAKLQDLAKECDLAGAIKSMFSGEKINRTENRAVLHVALRNRSNTPILVDGKDVMPEVNAVLEKMKTFSEAIISGEWKGYTGKAITDVVNIGIGGSDLGPYMVTEALRPYKNHLNMHFVSNVDGTHIAEVLKKVNPETTLFLVASKTFTTQETMTNAHSARDWFLKAAGDEKHVAKHFAALSTNAKAVGEFGIDTANMFEFWDWVGGRYSLWSAIGLSIVLSIGFDNFVELLSGAHAMDKHFSTTPAEKNLPVLLALIGIWYNNFFGAETEAILPYDQYMHRFAAYFQQGNMESNGKYVDRNGNVVDYQTGPIIWGEPGTNGQHAFYQLIHQGTKMVPCDFIAPAITHNPLSDHHQKLLSNFFAQTEALAFGKSREVVEQEYRDQGKDPATLDYVVPFKVFEGNRPTNSILLREITPFSLGALIALYEHKIFTQGVILNIFTFDQWGVELGKQLANRILPELKDDKEISSHDSSTNGLINRYKAWRG.

N6-acetyllysine occurs at positions 80, 228, and 234. The active-site Proton donor is Glu-355. Residues His-386 and Lys-514 contribute to the active site.

It belongs to the GPI family.

It localises to the cytoplasm. The enzyme catalyses alpha-D-glucose 6-phosphate = beta-D-fructose 6-phosphate. It participates in carbohydrate biosynthesis; gluconeogenesis. It functions in the pathway carbohydrate degradation; glycolysis; D-glyceraldehyde 3-phosphate and glycerone phosphate from D-glucose: step 2/4. Functionally, catalyzes the reversible isomerization of glucose-6-phosphate to fructose-6-phosphate. This Escherichia coli (strain SMS-3-5 / SECEC) protein is Glucose-6-phosphate isomerase.